The primary structure comprises 324 residues: Viral cathepsin (324 aa).

Residues 1-18 (MNKIVLYLLIYVGTFSAA) form the signal peptide. Positions 19–113 (YDLLKAPSYF…VVLNRPPDKG (95 aa)) are cleaved as a propeptide — activation peptide. 3 disulfide bridges follow: cysteine 134/cysteine 175, cysteine 168/cysteine 208, and cysteine 263/cysteine 311. Cysteine 137 is an active-site residue. An N-linked (GlcNAc...) asparagine; by host glycan is attached at asparagine 159. Active-site residues include histidine 270 and asparagine 290.

Belongs to the peptidase C1 family. In terms of processing, synthesized as an inactive proenzyme and activated by proteolytic removal of the inhibitory propeptide.

It catalyses the reaction Endopeptidase of broad specificity, hydrolyzing substrates of both cathepsin L and cathepsin B.. Its function is as follows. Cysteine protease that plays an essential role in host liquefaction to facilitate horizontal transmission of the virus. May participate in the degradation of foreign protein expressed by the baculovirus system. The sequence is that of Viral cathepsin (Vcath) from Choristoneura fumiferana defective polyhedrosis virus (Cfdef).